A 745-amino-acid chain; its full sequence is Ankyrin repeat and protein kinase domain-containing protein 1 (745 aa).

In terms of domain architecture, Protein kinase spans 34–301; that stretch reads EEEWHLVASG…NVAVETDMLL (268 aa). ATP contacts are provided by residues 40 to 48 and K63; that span reads VASGGFSKV. The active-site Proton acceptor is D157. ANK repeat units lie at residues 369-398, 402-431, 435-464, 468-497, 501-530, 534-563, 567-596, 600-629, 633-662, 666-695, and 699-728; these read NRVTPLHFLVAGGSLEQVRLLLSHDVDVDC, SGYTPLLIATQDQQPDLCALLLAHGADTNL, DGWAPLHFAAQNGDDHTARLLLDHGALVNA, EGWTPLHLAAQNNFENVARLLVSRQADLSP, EGKTPLHVAAYFGHIGLVKLLSGQGAELDA, NLRTPLHLAVERGKVRAIQHLLKCGALPDA, SGYSPLHIAAARGKDLIFKMLLRYGASLEL, QGWTPLHLATYKGHLEIIHQLAKSHVDLDA, MQWTPLHLAAFQGEEGVMLALLQCGANPNA, SGWTPLHLAVHKGTFLGITHLLEYGADIHA, and VGWTPAHLAALKGNTAILKVLVKAAAQVDV.

The protein belongs to the protein kinase superfamily. TKL Ser/Thr protein kinase family.

The catalysed reaction is L-seryl-[protein] + ATP = O-phospho-L-seryl-[protein] + ADP + H(+). It carries out the reaction L-threonyl-[protein] + ATP = O-phospho-L-threonyl-[protein] + ADP + H(+). This Mus musculus (Mouse) protein is Ankyrin repeat and protein kinase domain-containing protein 1 (Ankk1).